The chain runs to 221 residues: Serine/arginine-rich splicing factor 2 (221 aa).

Residue Ser-2 is modified to N-acetylserine. Position 2 is a phosphoserine (Ser-2). Positions Thr-14–Tyr-92 constitute an RRM domain. Residues Thr-22 and Thr-25 each carry the phosphothreonine modification. At Ser-26 the chain carries Phosphoserine. Lys-52 carries the N6-acetyllysine modification. Positions Tyr-92–Ser-221 are disordered. Basic residues-rich tracts occupy residues Arg-117–Ser-171 and Ser-179–Ser-189. Phosphoserine is present on residues Ser-189, Ser-191, Ser-204, Ser-206, Ser-208, Ser-212, and Ser-220.

It belongs to the splicing factor SR family. In terms of assembly, interacts with CCNL1 and CCNL2. Interacts with SCAF11. Interacts with ZRSR2/U2AF1-RS2. Interacts with CCDC55 (via C-terminus). In vitro, self-associates and binds SRSF1/SFRS1 (ASF/SF2), SNRNP70 and U2AF1 but not U2AF2. Binds SREK1/SFRS12. Interacts with BRDT. Extensively phosphorylated on serine residues in the RS domain. Phosphorylated by SRPK2 and this causes its redistribution from the nuclear speckle to nucleoplasm and controls cell fate decision in response to cisplatin treatment. KAT5/TIP60 inhibits its phosphorylation by preventing SRPK2 nuclear translocation. Post-translationally, acetylation on Lys-52 by KAT5/TIP60 promotes its proteasomal degradation. This effect is counterbalanced by HDAC6, which positively controls SRSF2 protein level by deacetylating it and preventing its proteasomal degradation. In terms of tissue distribution, expressed in all the tissues examined; liver, kidney, spleen, heart, lung and brain.

Its subcellular location is the nucleus. It localises to the nucleoplasm. The protein resides in the nucleus speckle. In terms of biological role, necessary for the splicing of pre-mRNA. It is required for formation of the earliest ATP-dependent splicing complex and interacts with spliceosomal components bound to both the 5'- and 3'-splice sites during spliceosome assembly. It also is required for ATP-dependent interactions of both U1 and U2 snRNPs with pre-mRNA. Can bind to the myelin basic protein (MBP) gene MB3 regulatory region and increase transcription of the mbp promoter in cells derived from the CNS. The phosphorylated form (by SRPK2) is required for cellular apoptosis in response to cisplatin treatment. The chain is Serine/arginine-rich splicing factor 2 (Srsf2) from Mus musculus (Mouse).